A 1222-amino-acid chain; its full sequence is ATP-dependent helicase/nuclease subunit A (1222 aa).

In terms of domain architecture, UvrD-like helicase ATP-binding spans 39 to 495 (QKRTAQQIEA…ILLKENFRSQ (457 aa)). Residue 60 to 67 (ASAGSGKT) participates in ATP binding. In terms of domain architecture, UvrD-like helicase C-terminal spans 524–810 (QLIAGSHAQT…NLMTIHKSKG (287 aa)).

It belongs to the helicase family. AddA subfamily. As to quaternary structure, heterodimer of AddA and AddB/RexB. Mg(2+) is required as a cofactor.

It carries out the reaction Couples ATP hydrolysis with the unwinding of duplex DNA by translocating in the 3'-5' direction.. The enzyme catalyses ATP + H2O = ADP + phosphate + H(+). In terms of biological role, the heterodimer acts as both an ATP-dependent DNA helicase and an ATP-dependent, dual-direction single-stranded exonuclease. Recognizes the chi site generating a DNA molecule suitable for the initiation of homologous recombination. The AddA nuclease domain is required for chi fragment generation; this subunit has the helicase and 3' -&gt; 5' nuclease activities. The polypeptide is ATP-dependent helicase/nuclease subunit A (Streptococcus pyogenes serotype M2 (strain MGAS10270)).